Consider the following 720-residue polypeptide: Photosystem I P700 chlorophyll a apoprotein A1 (720 aa).

Helical transmembrane passes span 61 to 84, 147 to 170, 186 to 210, 282 to 300, 337 to 360, 376 to 402, 424 to 446, and 522 to 540; these read VFSAHFGQLAIIFIWLSGMYFHGA, LYCTAIGALIFAALMLFAGWFHYH, LNHHLAGLLGLGSLSWAGHQIHVSL, TAHHHLAIAILFLIAGHMY, WHAQLALNLAMLGSLTIVVAHHMY, LSLFTHHMWIGGFLIVGAAAHAAIFMV, AIVSHLNWACIFLGFHSFGLYIH, and FLVHHIHAFTIHVTVLILL. The [4Fe-4S] cluster site is built by Cys-564 and Cys-573. Transmembrane regions (helical) follow at residues 580–601 and 655–677; these read HVFLGLFWMYNAISVVIFHFSW and LSAYGLLFLGAHFVWAFSLMFLF. His-666 is a chlorophyll a' binding site. Residues Met-674 and Tyr-682 each coordinate chlorophyll a. Trp-683 contacts phylloquinone. A helical membrane pass occupies residues 715–720; that stretch reads AVGVAH.

The protein belongs to the PsaA/PsaB family. The PsaA/B heterodimer binds the P700 chlorophyll special pair and subsequent electron acceptors. PSI consists of a core antenna complex that captures photons, and an electron transfer chain that converts photonic excitation into a charge separation. The eukaryotic PSI reaction center is composed of at least 11 subunits. It depends on P700 is a chlorophyll a/chlorophyll a' dimer, A0 is one or more chlorophyll a, A1 is one or both phylloquinones and FX is a shared 4Fe-4S iron-sulfur center. as a cofactor.

It is found in the plastid. It localises to the chloroplast thylakoid membrane. The catalysed reaction is reduced [plastocyanin] + hnu + oxidized [2Fe-2S]-[ferredoxin] = oxidized [plastocyanin] + reduced [2Fe-2S]-[ferredoxin]. Its function is as follows. PsaA and PsaB bind P700, the primary electron donor of photosystem I (PSI), as well as the electron acceptors A0, A1 and FX. PSI is a plastocyanin-ferredoxin oxidoreductase, converting photonic excitation into a charge separation, which transfers an electron from the donor P700 chlorophyll pair to the spectroscopically characterized acceptors A0, A1, FX, FA and FB in turn. Oxidized P700 is reduced on the lumenal side of the thylakoid membrane by plastocyanin. The sequence is that of Photosystem I P700 chlorophyll a apoprotein A1 from Sequoia sempervirens (California redwood).